A 323-amino-acid polypeptide reads, in one-letter code: Mortality factor 4-like protein 1 (323 aa).

Residues 12-62 (QEGERVLCFHGPLLYEAKCVKVAIKDKQVKYFIHYSGWNKNWDEWVPESRV) enclose the Tudor-knot domain. The tract at residues 77–143 (QKANQEQYAE…RKKRARVDPT (67 aa)) is disordered. A sufficient for interaction with SIN3A region spans residues 94–227 (PGKKTSGLQQ…VAGIKEYFNV (134 aa)). Lys104 is modified (N6-acetyllysine). The tract at residues 125–191 (STSETPQPPR…FYLPAKKNVD (67 aa)) is interaction with RB1-1. The sufficient for interaction with PHF12 stretch occupies residues 149 to 303 (TFMNRVEVKV…FLKYLAKNSA (155 aa)). The MRG domain occupies 152 to 323 (NRVEVKVKIP…APPEYHRKAV (172 aa)). The interaction with RB1-2 stretch occupies residues 284–305 (LALLLNYLHDFLKYLAKNSATL).

As to quaternary structure, component of the NuA4 histone acetyltransferase complex which contains the catalytic subunit KAT5/TIP60 and the subunits EP400, TRRAP/PAF400, BRD8/SMAP, EPC1, DMAP1/DNMAP1, RUVBL1/TIP49, RUVBL2, ING3, actin, ACTL6A/BAF53A, MORF4L1/MRG15, MORF4L2/MRGX, MRGBP, YEATS4/GAS41, VPS72/YL1 and MEAF6. The NuA4 complex interacts with MYC and the adenovirus E1A protein. MORF4L1 may also participate in the formation of NuA4 related complexes which lack the KAT5/TIP60 catalytic subunit, but which include the SWI/SNF related protein SRCAP. Component of the mSin3A histone deacetylase complex, which includes SIN3A, HDAC2, ARID4B, MORF4L1, RBBP4/RbAp48, and RBBP7/RbAp46. May also interact with PHF12 and one or more as yet undefined members of the TLE (transducin-like enhancer of split) family of transcriptional repressors. Component of the SIN3B complex, which includes SIN3B, HDAC2 or HDAC1, PHF12 and MORF4L1. Interacts with RB1 and KAT8. Interacts with the N-terminus of MRFAP1. Found in a complex composed of MORF4L1, MRFAP1 and RB1. Interacts with the entire BRCA complex, which contains BRCA1, PALB2, BRCA2 and RAD51. Interacts with PALB2. Forms a complex with MSL1 and NUPR1.

It localises to the nucleus. Functionally, component of the NuA4 histone acetyltransferase (HAT) complex which is involved in transcriptional activation of select genes principally by acetylation of nucleosomal histones H4 and H2A. This modification may both alter nucleosome - DNA interactions and promote interaction of the modified histones with other proteins which positively regulate transcription. This complex may be required for the activation of transcriptional programs associated with oncogene and proto-oncogene mediated growth induction, tumor suppressor mediated growth arrest and replicative senescence, apoptosis, and DNA repair. The NuA4 complex ATPase and helicase activities seem to be, at least in part, contributed by the association of RUVBL1 and RUVBL2 with EP400. NuA4 may also play a direct role in DNA repair when directly recruited to sites of DNA damage. As part of the SIN3B complex represses transcription and counteracts the histone acetyltransferase activity of EP300 through the recognition H3K27ac marks by PHF12 and the activity of the histone deacetylase HDAC2. SIN3B complex is recruited downstream of the constitutively active genes transcriptional start sites through interaction with histones and mitigates histone acetylation and RNA polymerase II progression within transcribed regions contributing to the regulation of transcription. Required for homologous recombination repair (HRR) and resistance to mitomycin C (MMC). Involved in the localization of PALB2, BRCA2 and RAD51, but not BRCA1, to DNA-damage foci. The protein is Mortality factor 4-like protein 1 (Morf4l1) of Rattus norvegicus (Rat).